The sequence spans 241 residues: UDP-2,3-diacylglucosamine hydrolase (241 aa).

Residues aspartate 8, histidine 10, aspartate 41, asparagine 79, and histidine 114 each coordinate Mn(2+). 79–80 contacts substrate; sequence NR. Substrate contacts are provided by aspartate 122, serine 160, lysine 167, and histidine 195. Histidine 195 and histidine 197 together coordinate Mn(2+).

It belongs to the LpxH family. It depends on Mn(2+) as a cofactor.

The protein localises to the cell inner membrane. The enzyme catalyses UDP-2-N,3-O-bis[(3R)-3-hydroxytetradecanoyl]-alpha-D-glucosamine + H2O = 2-N,3-O-bis[(3R)-3-hydroxytetradecanoyl]-alpha-D-glucosaminyl 1-phosphate + UMP + 2 H(+). It participates in glycolipid biosynthesis; lipid IV(A) biosynthesis; lipid IV(A) from (3R)-3-hydroxytetradecanoyl-[acyl-carrier-protein] and UDP-N-acetyl-alpha-D-glucosamine: step 4/6. Functionally, hydrolyzes the pyrophosphate bond of UDP-2,3-diacylglucosamine to yield 2,3-diacylglucosamine 1-phosphate (lipid X) and UMP by catalyzing the attack of water at the alpha-P atom. Involved in the biosynthesis of lipid A, a phosphorylated glycolipid that anchors the lipopolysaccharide to the outer membrane of the cell. In Azotobacter vinelandii (strain DJ / ATCC BAA-1303), this protein is UDP-2,3-diacylglucosamine hydrolase.